A 271-amino-acid polypeptide reads, in one-letter code: MAEYSGPAKPTLALNPREDSQFEKDLTQIQRRAKKKKEEKLNSGVVYLGHLPSTLSESHIYDYCAQFGDIRRFRLSRSKRTGNSRGFAFVEFESEDVAKIVAETMDNYLFGERLLSCKFMPREKVHKDLFNQCNVPFHPPSFPAVKRYNQKRGHLQMLKMEYRFKKKEKLLRKKLAKKGIDYSFPSLVLPKPKKEISSIANTHGDSEANQDPTPVCTPTFLERRKSQLMEINDDDEIILKLPVSPVKEDTQKTPAPESSGKKRLRKRKSKQ.

A disordered region spans residues 1–20; that stretch reads MAEYSGPAKPTLALNPREDS. Alanine 2 carries the post-translational modification N-acetylalanine. Residue lysine 37 forms a Glycyl lysine isopeptide (Lys-Gly) (interchain with G-Cter in SUMO2) linkage. Residues 44-122 form the RRM domain; sequence GVVYLGHLPS…RLLSCKFMPR (79 aa). Arginine 113 is modified (omega-N-methylarginine). Glycyl lysine isopeptide (Lys-Gly) (interchain with G-Cter in SUMO2) cross-links involve residues lysine 178 and lysine 191. Phosphothreonine occurs at positions 213 and 217. 2 positions are modified to omega-N-methylated arginine: arginine 223 and arginine 224. Serine 226 carries the post-translational modification Phosphoserine. Positions 242-271 are disordered; that stretch reads PVSPVKEDTQKTPAPESSGKKRLRKRKSKQ. Lysine 247 participates in a covalent cross-link: Glycyl lysine isopeptide (Lys-Gly) (interchain with G-Cter in SUMO1); alternate. Residue lysine 247 forms a Glycyl lysine isopeptide (Lys-Gly) (interchain with G-Cter in SUMO2); alternate linkage. Residues 261–271 show a composition bias toward basic residues; it reads KKRLRKRKSKQ.

Binds to the FHA domain of MKI67; this interaction is enhanced in mitosis. Phosphorylated.

Its subcellular location is the nucleus. It is found in the nucleolus. The protein resides in the chromosome. The sequence is that of MKI67 FHA domain-interacting nucleolar phosphoprotein (Nifk) from Rattus norvegicus (Rat).